The chain runs to 159 residues: MAIRYIRKIGDPVLRKKAKPVTEINSHIITILEDMAETMYLNDGVGLAANQVGILRRLVVIDVGEGLLELINPEIVYEEGEQIGPEGCLSIPGVFGEVKRPQKVKVRYLDREGNVKEIVGEDLLARALCHEIDHLEGVLFVDKVIRFLDKEELEGVKEV.

The Fe cation site is built by cysteine 88 and histidine 130. Glutamate 131 is an active-site residue. Residue histidine 134 coordinates Fe cation.

It belongs to the polypeptide deformylase family. Fe(2+) serves as cofactor.

It carries out the reaction N-terminal N-formyl-L-methionyl-[peptide] + H2O = N-terminal L-methionyl-[peptide] + formate. Functionally, removes the formyl group from the N-terminal Met of newly synthesized proteins. Requires at least a dipeptide for an efficient rate of reaction. N-terminal L-methionine is a prerequisite for activity but the enzyme has broad specificity at other positions. The polypeptide is Peptide deformylase (Caldanaerobacter subterraneus subsp. tengcongensis (strain DSM 15242 / JCM 11007 / NBRC 100824 / MB4) (Thermoanaerobacter tengcongensis)).